A 906-amino-acid polypeptide reads, in one-letter code: Catenin alpha-1 (906 aa).

Thr2 is subject to N-acetylthreonine. The involved in homodimerization stretch occupies residues 2–228 (TAVHAGNINF…PILYTASQAC (227 aa)). Residue Lys57 forms a Glycyl lysine isopeptide (Lys-Gly) (interchain with G-Cter in SUMO2) linkage. Positions 97 to 148 (VRKQGDLMKAAAGEFADDPCSSVKRGNMVRAARALLSAVTRLLILADMADVY) are interaction with JUP and CTNNB1. Phosphoserine is present on residues Ser264, Ser268, Ser295, and Ser297. Positions 325 to 394 (TRDDRRERIV…AVMDHVSDSF (70 aa)) are interaction with alpha-actinin. The residue at position 634 (Thr634) is a Phosphothreonine. Ser641 is subject to Phosphoserine; by CK2. Thr645 is subject to Phosphothreonine. Ser652 and Ser655 each carry phosphoserine; by CK1. At Thr658 the chain carries Phosphothreonine; by CK1. Lys797 participates in a covalent cross-link: Glycyl lysine isopeptide (Lys-Gly) (interchain with G-Cter in SUMO2). Ser851 is subject to Phosphoserine. The segment covering 864–880 (PEKKPLVKREKQDETQT) has biased composition (basic and acidic residues). Residues 864 to 894 (PEKKPLVKREKQDETQTKIKRASQKKHVNPV) are disordered. Residues 881 to 891 (KIKRASQKKHV) show a composition bias toward basic residues.

Belongs to the vinculin/alpha-catenin family. In terms of assembly, monomer and homodimer; the monomer preferentially binds to CTNNB1 and the homodimer to actin. Component of an cadherin:catenin adhesion complex composed of at least of CDH26, beta-catenin/CTNNB1, alpha-catenin/CTNNA1 and p120 catenin/CTNND1. Possible component of an E-cadherin/ catenin adhesion complex together with E-cadherin/CDH1 and beta-catenin/CTNNB1 or gamma-catenin/JUP; the complex is located to adherens junctions. The stable association of CTNNA1 is controversial as CTNNA1 was shown not to bind to F-actin when assembled in the complex. Alternatively, the CTNNA1-containing complex may be linked to F-actin by other proteins such as LIMA1. Binds AFDN and F-actin. Interacts with ARHGAP21. Interacts with AJUBA. Interacts with LIMA1. Interacts with vinculin/VCL. Interacts with TJP2/ZO2 (via N-terminus). Interacts with TJP1/ZO1 (via N-terminus). Post-translationally, sumoylated. In terms of processing, phosphorylation seems to contribute to the strength of cell-cell adhesion rather than to the basic capacity for cell-cell adhesion. In terms of tissue distribution, ubiquitously expressed in normal tissues. Abundantly expressed in brain and cerebellum, also expressed in the placenta, liver, lung, colon, heart, pancreas, stomach and thymus.

The protein resides in the cytoplasm. It is found in the cytoskeleton. It localises to the cell junction. The protein localises to the adherens junction. Its subcellular location is the cell membrane. The protein resides in the nucleus. Functionally, associates with the cytoplasmic domain of a variety of cadherins. The association of catenins to cadherins produces a complex which is linked to the actin filament network, and which seems to be of primary importance for cadherins cell-adhesion properties. Can associate with both E- and N-cadherins. Originally believed to be a stable component of E-cadherin/catenin adhesion complexes and to mediate the linkage of cadherins to the actin cytoskeleton at adherens junctions. In contrast, cortical actin was found to be much more dynamic than E-cadherin/catenin complexes and CTNNA1 was shown not to bind to F-actin when assembled in the complex suggesting a different linkage between actin and adherens junctions components. The homodimeric form may regulate actin filament assembly and inhibit actin branching by competing with the Arp2/3 complex for binding to actin filaments. Involved in the regulation of WWTR1/TAZ, YAP1 and TGFB1-dependent SMAD2 and SMAD3 nuclear accumulation. May play a crucial role in cell differentiation. The protein is Catenin alpha-1 of Homo sapiens (Human).